A 201-amino-acid polypeptide reads, in one-letter code: Recombination protein RecR (201 aa).

Residues 60-75 form a C4-type zinc finger; sequence CSRCGNVDTVDPCTVC. Residues 83-178 enclose the Toprim domain; it reads SVIIVVEDVS…KITRLAHGVP (96 aa).

It belongs to the RecR family.

In terms of biological role, may play a role in DNA repair. It seems to be involved in an RecBC-independent recombinational process of DNA repair. It may act with RecF and RecO. This Rhizobium etli (strain ATCC 51251 / DSM 11541 / JCM 21823 / NBRC 15573 / CFN 42) protein is Recombination protein RecR.